Consider the following 313-residue polypeptide: UDP-N-acetylglucosamine 3-dehydrogenase (313 aa).

NAD(+)-binding residues include histidine 13, leucine 14, and arginine 38.

It belongs to the Gfo/Idh/MocA family. Exists in multiple oligomeric states.

It catalyses the reaction UDP-N-acetyl-alpha-D-glucosamine + NAD(+) = UDP-2-acetamido-3-dehydro-2-deoxy-alpha-D-glucopyranose + NADH + H(+). It participates in bacterial outer membrane biogenesis; LPS lipid A biosynthesis. Its function is as follows. Oxidoreductase involved in the synthesis of 2,3-diamino-2,3-dideoxy-D-glucopyranose (GlcN3N), which is a component of lipid A in some species. Catalyzes the NAD(+)-dependent oxidation of the glucosamine 3-position of UDP-N-acetyl-glucosamine (UDP-GlcNAc) to a ketone moiety, forming UDP-2-acetamido-3-dehydro-2-deoxy-alpha-D-glucopyranose (UDP-3-oxo-GlcNAc). Is specific for UDP-GlcNAc, no activity is observed with UDP-glucose (UDP-Glc), UDP-glucoronic acid (UDP-GlcA), UDP-galactose (UDP-Gal) and UDP-N-acetylgalactosamine (UDP-GalNAc). Cannot use FAD(+) and NADP(+). This chain is UDP-N-acetylglucosamine 3-dehydrogenase, found in Acidithiobacillus ferrooxidans (strain ATCC 23270 / DSM 14882 / CIP 104768 / NCIMB 8455) (Ferrobacillus ferrooxidans (strain ATCC 23270)).